A 490-amino-acid chain; its full sequence is Selenium-binding protein 1 (490 aa).

At Ala2 the chain carries N-acetylalanine. Selenite contacts are provided by Cys21 and Cys22.

The protein belongs to the selenium-binding protein family. Interacts with GRXS14 and GRXS16. Interacts with DALL3. Expressed in seedlings, roots, leaves, stems and flowers.

In terms of biological role, binds cadmium and mediates lower sensitivity to stress requiring glutathione (GSH) for tolerance (e.g. cadmium, selenate, and hydrogen peroxide excess). Probably helps to detoxify cadmium potentially through direct binding. Binds selenium, cadmium, zinc and nickel in vitro. The protein is Selenium-binding protein 1 of Arabidopsis thaliana (Mouse-ear cress).